The sequence spans 727 residues: Catalase-peroxidase (727 aa).

The disordered stretch occupies residues 1–24; sequence MDQKSDSAGKCPVAHTAPRGRSNR. Residues 95 to 217 constitute a cross-link (tryptophyl-tyrosyl-methioninium (Trp-Tyr) (with M-243)); the sequence is WHSAGTYRIT…LAAVQMGLIY (123 aa). Catalysis depends on H96, which acts as the Proton acceptor. Positions 217–243 form a cross-link, tryptophyl-tyrosyl-methioninium (Tyr-Met) (with W-95); it reads YVNPEGPNGNPDPVAAARDIRETFARM. Residue H258 participates in heme b binding.

Belongs to the peroxidase family. Peroxidase/catalase subfamily. Homodimer or homotetramer. Heme b serves as cofactor. Formation of the three residue Trp-Tyr-Met cross-link is important for the catalase, but not the peroxidase activity of the enzyme.

The enzyme catalyses H2O2 + AH2 = A + 2 H2O. It carries out the reaction 2 H2O2 = O2 + 2 H2O. In terms of biological role, bifunctional enzyme with both catalase and broad-spectrum peroxidase activity. The protein is Catalase-peroxidase of Rhizobium meliloti (strain 1021) (Ensifer meliloti).